Here is a 146-residue protein sequence, read N- to C-terminus: ATP synthase epsilon chain (146 aa).

Residues 92-116 (ISVDQARRDRDSLRKKLNEHERSEQ) are compositionally biased toward basic and acidic residues. The tract at residues 92 to 120 (ISVDQARRDRDSLRKKLNEHERSEQDPEV) is disordered.

The protein belongs to the ATPase epsilon chain family. As to quaternary structure, F-type ATPases have 2 components, CF(1) - the catalytic core - and CF(0) - the membrane proton channel. CF(1) has five subunits: alpha(3), beta(3), gamma(1), delta(1), epsilon(1). CF(0) has three main subunits: a, b and c.

It is found in the cell membrane. Its function is as follows. Produces ATP from ADP in the presence of a proton gradient across the membrane. The protein is ATP synthase epsilon chain of Cutibacterium acnes (strain DSM 16379 / KPA171202) (Propionibacterium acnes).